A 281-amino-acid chain; its full sequence is MSVTDGRQAFPAPAKLNLDLRITGRREDGYHNIESIFCLIDLQDTVYLKPRDDGKIILHNPVDGMPQEADLSYRAASLLQKYARTPTGVEIWLDKKIPTGAGLGGGSSDAATVLLVLNRWWQCGLTQRQLIDSGAALGADVPFFIFGKNAFARGIGDRLDEMDIPKQWYVIVKPPVHVSTAKIFTHEGLTRNSASSIMPTFQNLQPFRNDMQAVVFKEYPEVWKAYSELSRYGFALMTGSGACVFTACQDRNSAYNIYRQVSDLYEAYLAEGLSKHPLLSV.

Lys-15 is an active-site residue. 98 to 108 (PTGAGLGGGSS) serves as a coordination point for ATP. The active site involves Asp-140.

The protein belongs to the GHMP kinase family. IspE subfamily.

It catalyses the reaction 4-CDP-2-C-methyl-D-erythritol + ATP = 4-CDP-2-C-methyl-D-erythritol 2-phosphate + ADP + H(+). It participates in isoprenoid biosynthesis; isopentenyl diphosphate biosynthesis via DXP pathway; isopentenyl diphosphate from 1-deoxy-D-xylulose 5-phosphate: step 3/6. In terms of biological role, catalyzes the phosphorylation of the position 2 hydroxy group of 4-diphosphocytidyl-2C-methyl-D-erythritol. This chain is 4-diphosphocytidyl-2-C-methyl-D-erythritol kinase, found in Neisseria meningitidis serogroup A / serotype 4A (strain DSM 15465 / Z2491).